The following is a 469-amino-acid chain: Glutamate--tRNA ligase (469 aa).

Positions 12–22 (PSPTGFIHLGN) match the 'HIGH' region motif. A 'KMSKS' region motif is present at residues 244 to 248 (KMSKR). Lys247 is a binding site for ATP.

It belongs to the class-I aminoacyl-tRNA synthetase family. Glutamate--tRNA ligase type 1 subfamily. In terms of assembly, monomer.

Its subcellular location is the cytoplasm. It carries out the reaction tRNA(Glu) + L-glutamate + ATP = L-glutamyl-tRNA(Glu) + AMP + diphosphate. Catalyzes the attachment of glutamate to tRNA(Glu) in a two-step reaction: glutamate is first activated by ATP to form Glu-AMP and then transferred to the acceptor end of tRNA(Glu). This Acidovorax sp. (strain JS42) protein is Glutamate--tRNA ligase.